Consider the following 509-residue polypeptide: Src substrate cortactin (509 aa).

Residues 1–28 (MWKASAGHAVSITQDDGGADDWETDPDF) form a disordered region. Residues 17–28 (GGADDWETDPDF) show a composition bias toward acidic residues. Cortactin repeat units follow at residues 80 to 116 (ASHGYGGKFGVEQDRMDKSAVGHEYQSKLSKHCSQVD), 117 to 153 (SVRGFGGKFGVQMDRVDQSAVGFEYQGKTEKHASQKD), 154 to 190 (YSSGFGGKYGVQADRVDKSAVGFDYQGKTEKHESQKD), 191 to 227 (YSKGFGGKYGIDKDKVDKSAVGFEYQGKTEKHESQKD), and 228 to 264 (YVKGFGGKFGVQTDRQDKCALGWDHQEKLQLHESQKD). N6-acetyllysine occurs at positions 87 and 107. At S113 the chain carries Phosphoserine. The residue at position 119 (R119) is an Omega-N-methylarginine. N6-acetyllysine is present on K124. K144 carries the post-translational modification N6-acetyllysine; alternate. K144 is covalently cross-linked (Glycyl lysine isopeptide (Lys-Gly) (interchain with G-Cter in SUMO1); alternate). A Glycyl lysine isopeptide (Lys-Gly) (interchain with G-Cter in SUMO2); alternate cross-link involves residue K144. S150 carries the post-translational modification Phosphoserine. N6-acetyllysine is present on residues K152, K161, and K171. K181 is subject to N6-acetyllysine; alternate. K181 is covalently cross-linked (Glycyl lysine isopeptide (Lys-Gly) (interchain with G-Cter in SUMO1); alternate). Residue K181 forms a Glycyl lysine isopeptide (Lys-Gly) (interchain with G-Cter in SUMO2); alternate linkage. N6-acetyllysine occurs at positions 193 and 198. A Glycyl lysine isopeptide (Lys-Gly) (interchain with G-Cter in SUMO1) cross-link involves residue K218. N6-acetyllysine is present on K235. At S261 the chain carries Phosphoserine. A Cortactin 6; truncated repeat occupies 265–287 (YAKGFGGKYGVQKDRMDKNASTF). N6-acetyllysine is present on residues K267, K272, K277, and K309. Positions 311–364 (SNIRANFENLAKEREQEDRRKAEAERAQRMAQERQEQEEARRKLEEQARAKKQT) form a coiled coil. Residues 318-409 (ENLAKEREQE…EPEPEYSTEA (92 aa)) form a disordered region. Residues 320–359 (LAKEREQEDRRKAEAERAQRMAQERQEQEEARRKLEEQAR) are compositionally biased toward basic and acidic residues. Position 364 is a phosphothreonine (T364). S368, S370, S380, and S381 each carry phosphoserine. Phosphotyrosine; by FAK1 is present on Y384. The segment covering 393–406 (EPSYGSSEPEPEYS) has biased composition (low complexity). Phosphotyrosine is present on Y405. At S406 the chain carries Phosphoserine. 2 positions are modified to phosphotyrosine; by FAK1: Y429 and Y445. Y445 and Y448 each carry phosphotyrosine; by SRC. One can recognise an SH3 domain in the interval 451–509 (DLGITAIALYDYQAAGDDEISFDPDDVITNIEMIDDGWWRGVCKGRYGLFPANYVELRQ).

As to quaternary structure, part of a complex composed of NEDD9, AURKA and CTTN; within the complex NEDD9 acts as a scaffold protein and is required for complex formation. Interacts (via N-terminus) with NEDD9. Identified in a complex containing FGFR4, NCAM1, CDH2, PLCG1, FRS2, SRC, SHC1, GAP43 and CTTN. Forms a complex with ABL1 and MYLK. Interacts with SHANK2 and SHANK3 (via its SH3 domain). Interacts with PLXDC2 and SRCIN1. Interacts with SAMSN1 (via SH3 domain). Interacts (via SH3 domain) with ASAP1 (via Pro-rich region). Interacts with FER. Interacts with FGD1. Interacts with ABL2. Interacts with CTTNBP2NL; this interaction may target CTTN to stress fibers. Interacts with CTTNBP2; this interaction may target CTTN at the cell cortex or dendritic spines. Interacts (via SH3 domain) with DNM2. Interacts with ACTN1. Interacts with KCNA2 (via non-phosphorylated C-terminus). Interacts with PTK2/FAK1. Interacts with KCNH1. Interacts (via SH3 domain) with DIP2A (via N-terminus); the interaction enhances CTTN acetylation and is required for proper synaptic transmission. Interacts with XIRP1 (via N-terminus); the interaction promotes CTTN localization to intercalated disks in cardiomyocytes. Post-translationally, acetylated. Phosphorylated by FER. Phosphorylated in response to FGR activation. Phosphorylation by SRC promotes MYLK binding. Tyrosine phosphorylation in transformed cells may contribute to cellular growth regulation and transformation. Phosphorylated by PKN2 at both serine and threonine residues in a GTP-bound Rac1-dependent manner in hyaluronan-induced astrocytes and hence down-regulated CTTN ability to associate with filamentous actin. Phosphorylated on tyrosine residues in response to CHRM1 activation. Phosphorylated by PTK2/FAK1 in response to cell adhesion. In terms of tissue distribution, detected in liver (at protein level).

It localises to the cytoplasm. The protein localises to the cytoskeleton. The protein resides in the cell projection. It is found in the lamellipodium. Its subcellular location is the ruffle. It localises to the dendrite. The protein localises to the cell membrane. The protein resides in the podosome. It is found in the cell junction. Its subcellular location is the focal adhesion. It localises to the membrane. The protein localises to the clathrin-coated pit. The protein resides in the dendritic spine. It is found in the cell cortex. Its subcellular location is the endoplasmic reticulum. Contributes to the organization of the actin cytoskeleton and cell shape. Plays a role in the formation of lamellipodia and in cell migration. Plays a role in the regulation of neuron morphology, axon growth and formation of neuronal growth cones. Through its interaction with CTTNBP2, involved in the regulation of neuronal spine density. Plays a role in focal adhesion assembly and turnover. In complex with ABL1 and MYLK regulates cortical actin-based cytoskeletal rearrangement critical to sphingosine 1-phosphate (S1P)-mediated endothelial cell (EC) barrier enhancement. Plays a role in intracellular protein transport and endocytosis, and in modulating the levels of potassium channels present at the cell membrane. Plays a role in receptor-mediated endocytosis via clathrin-coated pits. Required for stabilization of KCNH1 channels at the cell membrane. In Rattus norvegicus (Rat), this protein is Src substrate cortactin.